The chain runs to 142 residues: Hemoglobin subunit alpha (142 aa).

A Globin domain is found at 2–142 (VLSPDDKKHV…VSTVLTSKYR (141 aa)). A Phosphoserine modification is found at serine 4. 2 positions are modified to N6-succinyllysine: lysine 8 and lysine 12. An N6-acetyllysine; alternate modification is found at lysine 17. The residue at position 17 (lysine 17) is an N6-succinyllysine; alternate. Tyrosine 25 carries the post-translational modification Phosphotyrosine. Serine 36 is subject to Phosphoserine. Lysine 41 is subject to N6-succinyllysine. Serine 50 is subject to Phosphoserine. Histidine 59 provides a ligand contact to O2. Histidine 88 serves as a coordination point for heme b. Serine 103 is subject to Phosphoserine. The residue at position 109 (threonine 109) is a Phosphothreonine. Phosphoserine is present on residues serine 125 and serine 132. A phosphothreonine mark is found at threonine 135 and threonine 138. Serine 139 bears the Phosphoserine mark.

This sequence belongs to the globin family. As to quaternary structure, heterotetramer of two alpha chains and two beta chains. Red blood cells.

Its function is as follows. Involved in oxygen transport from the lung to the various peripheral tissues. In terms of biological role, hemopressin acts as an antagonist peptide of the cannabinoid receptor CNR1. Hemopressin-binding efficiently blocks cannabinoid receptor CNR1 and subsequent signaling. This chain is Hemoglobin subunit alpha (HBA), found in Papio anubis (Olive baboon).